Consider the following 243-residue polypeptide: Derlin-1.2 (243 aa).

The Cytoplasmic segment spans residues 1-20 (MSSPAEYYKSLPPISKAYGT). The chain crosses the membrane as a helical span at residues 21-41 (LCFFTTVLVRLHILNPLFLYL). The Lumenal segment spans residues 42-54 (YYPRVFKKFEVWR). A helical membrane pass occupies residues 55-75 (IFTSFFFLGPFSINFGIRLLM). Residues 76 to 94 (IARYGVMLEKGAFDKRTAD) are Cytoplasmic-facing. Residues 95-115 (FLWMMIFGAISLLVLSVIPQL) form a helical membrane-spanning segment. The Lumenal portion of the chain corresponds to 116 to 155 (NTYVLGLPMVSMLVYVWSRENPNAQINIYGILQLKAFYLP). The chain crosses the membrane as a helical span at residues 156–176 (WVMLLLDVIFGSPLMPGLLGI). The Cytoplasmic portion of the chain corresponds to 177-243 (MVGHLYYYFA…FRGRSYRLNQ (67 aa)).

This sequence belongs to the derlin family. As to expression, expressed in roots and endosperm.

The protein resides in the endoplasmic reticulum membrane. Its function is as follows. May be involved in the degradation process of specific misfolded endoplasmic reticulum (ER) luminal proteins. This is Derlin-1.2 (DER1.2) from Zea mays (Maize).